A 445-amino-acid polypeptide reads, in one-letter code: ATP-dependent protease ATPase subunit HslU (445 aa).

Residues Ile-18, 60-65 (GVGKTE), Asp-258, Glu-323, and Arg-395 each bind ATP.

The protein belongs to the ClpX chaperone family. HslU subfamily. A double ring-shaped homohexamer of HslV is capped on each side by a ring-shaped HslU homohexamer. The assembly of the HslU/HslV complex is dependent on binding of ATP.

The protein resides in the cytoplasm. ATPase subunit of a proteasome-like degradation complex; this subunit has chaperone activity. The binding of ATP and its subsequent hydrolysis by HslU are essential for unfolding of protein substrates subsequently hydrolyzed by HslV. HslU recognizes the N-terminal part of its protein substrates and unfolds these before they are guided to HslV for hydrolysis. In Syntrophotalea carbinolica (strain DSM 2380 / NBRC 103641 / GraBd1) (Pelobacter carbinolicus), this protein is ATP-dependent protease ATPase subunit HslU.